The primary structure comprises 291 residues: N-acetylmannosamine kinase (291 aa).

ATP contacts are provided by residues 5–12 (AIDIGGTK) and 132–139 (GVGGGVVS). Zn(2+) is bound by residues H156, C166, C168, and C173.

This sequence belongs to the ROK (NagC/XylR) family. NanK subfamily. Homodimer.

The catalysed reaction is an N-acyl-D-mannosamine + ATP = an N-acyl-D-mannosamine 6-phosphate + ADP + H(+). It functions in the pathway amino-sugar metabolism; N-acetylneuraminate degradation; D-fructose 6-phosphate from N-acetylneuraminate: step 2/5. Its function is as follows. Catalyzes the phosphorylation of N-acetylmannosamine (ManNAc) to ManNAc-6-P. The sequence is that of N-acetylmannosamine kinase from Escherichia coli O7:K1 (strain IAI39 / ExPEC).